The primary structure comprises 100 residues: uncharacterized protein (100 aa).

Belongs to the ycf15 family.

Its subcellular location is the plastid. The protein localises to the chloroplast. This is an uncharacterized protein from Panax ginseng (Korean ginseng).